Consider the following 296-residue polypeptide: NAD kinase (296 aa).

Asp74 acts as the Proton acceptor in catalysis. Residues 74–75 (DG), 148–149 (ND), Arg176, Asp178, and 189–194 (TAYALS) each bind NAD(+).

This sequence belongs to the NAD kinase family. It depends on a divalent metal cation as a cofactor.

Its subcellular location is the cytoplasm. The catalysed reaction is NAD(+) + ATP = ADP + NADP(+) + H(+). Its function is as follows. Involved in the regulation of the intracellular balance of NAD and NADP, and is a key enzyme in the biosynthesis of NADP. Catalyzes specifically the phosphorylation on 2'-hydroxyl of the adenosine moiety of NAD to yield NADP. This is NAD kinase from Nitrosomonas eutropha (strain DSM 101675 / C91 / Nm57).